A 62-amino-acid chain; its full sequence is uncharacterized protein (62 aa).

The chain crosses the membrane as a helical span at residues 37–57 (FILGVILLGVIIESITLLVVY).

It localises to the membrane. This is an uncharacterized protein from Dictyostelium discoideum (Social amoeba).